The primary structure comprises 145 residues: Immune protein Tsi4 (145 aa).

2 consecutive transmembrane segments (helical) span residues I9–G29 and A109–F129.

Its subcellular location is the membrane. Immunity protein that plays a role in preventing early activation of toxin Tse4. This chain is Immune protein Tsi4, found in Pseudomonas aeruginosa (strain ATCC 15692 / DSM 22644 / CIP 104116 / JCM 14847 / LMG 12228 / 1C / PRS 101 / PAO1).